The sequence spans 728 residues: Phosphoribosylformylglycinamidine synthase subunit PurL (728 aa).

H42 is an active-site residue. The ATP site is built by Y45 and K84. Residue E86 participates in Mg(2+) binding. Residues 87–90 and R109 each bind substrate; that span reads SHNH. Residue H88 is the Proton acceptor of the active site. Residue D110 coordinates Mg(2+). Q237 serves as a coordination point for substrate. D265 is a Mg(2+) binding site. Residue 309–311 participates in substrate binding; it reads ESQ. 2 residues coordinate ATP: D491 and G528. N529 contributes to the Mg(2+) binding site. S531 contacts substrate.

The protein belongs to the FGAMS family. As to quaternary structure, monomer. Part of the FGAM synthase complex composed of 1 PurL, 1 PurQ and 2 PurS subunits.

The protein localises to the cytoplasm. It catalyses the reaction N(2)-formyl-N(1)-(5-phospho-beta-D-ribosyl)glycinamide + L-glutamine + ATP + H2O = 2-formamido-N(1)-(5-O-phospho-beta-D-ribosyl)acetamidine + L-glutamate + ADP + phosphate + H(+). It functions in the pathway purine metabolism; IMP biosynthesis via de novo pathway; 5-amino-1-(5-phospho-D-ribosyl)imidazole from N(2)-formyl-N(1)-(5-phospho-D-ribosyl)glycinamide: step 1/2. Functionally, part of the phosphoribosylformylglycinamidine synthase complex involved in the purines biosynthetic pathway. Catalyzes the ATP-dependent conversion of formylglycinamide ribonucleotide (FGAR) and glutamine to yield formylglycinamidine ribonucleotide (FGAM) and glutamate. The FGAM synthase complex is composed of three subunits. PurQ produces an ammonia molecule by converting glutamine to glutamate. PurL transfers the ammonia molecule to FGAR to form FGAM in an ATP-dependent manner. PurS interacts with PurQ and PurL and is thought to assist in the transfer of the ammonia molecule from PurQ to PurL. In Campylobacter jejuni (strain RM1221), this protein is Phosphoribosylformylglycinamidine synthase subunit PurL.